The chain runs to 405 residues: Serine/threonine transporter SstT (405 aa).

8 helical membrane-spanning segments follow: residues 13–33 (GGSL…LAGF), 43–63 (FLGD…VFVL), 82–102 (IILL…LMSF), 141–161 (ALIN…GIAL), 185–205 (FVIC…IAQT), 217–237 (LGVL…LIVF), 298–318 (MAGA…TLGI), and 339–359 (ASGV…LFGI).

It belongs to the dicarboxylate/amino acid:cation symporter (DAACS) (TC 2.A.23) family.

It localises to the cell inner membrane. It catalyses the reaction L-serine(in) + Na(+)(in) = L-serine(out) + Na(+)(out). The enzyme catalyses L-threonine(in) + Na(+)(in) = L-threonine(out) + Na(+)(out). Its function is as follows. Involved in the import of serine and threonine into the cell, with the concomitant import of sodium (symport system). The polypeptide is Serine/threonine transporter SstT (Shewanella amazonensis (strain ATCC BAA-1098 / SB2B)).